We begin with the raw amino-acid sequence, 313 residues long: Glutathione synthetase (313 aa).

One can recognise an ATP-grasp domain in the interval 125–309 (KIFVTEFADL…IASLFWDAVE (185 aa)). An ATP-binding site is contributed by 151–207 (RKEFGDIIVKPLYGNGGAGIFHLHEADRNLASLLEMFGQLFREPYIVQRYLKDVRKG). Glu280 and Asn282 together coordinate Mg(2+).

This sequence belongs to the prokaryotic GSH synthase family. Requires Mg(2+) as cofactor. The cofactor is Mn(2+).

It catalyses the reaction gamma-L-glutamyl-L-cysteine + glycine + ATP = glutathione + ADP + phosphate + H(+). The protein operates within sulfur metabolism; glutathione biosynthesis; glutathione from L-cysteine and L-glutamate: step 2/2. In Mesorhizobium japonicum (strain LMG 29417 / CECT 9101 / MAFF 303099) (Mesorhizobium loti (strain MAFF 303099)), this protein is Glutathione synthetase.